The chain runs to 136 residues: Small ribosomal subunit protein uS9 (136 aa).

The tract at residues 111 to 136 is disordered; that stretch reads TRDPRMKERKKTGQPGARKRFQFSKR. Residues 117–136 show a composition bias toward basic residues; it reads KERKKTGQPGARKRFQFSKR.

This sequence belongs to the universal ribosomal protein uS9 family.

This Methylacidiphilum infernorum (isolate V4) (Methylokorus infernorum (strain V4)) protein is Small ribosomal subunit protein uS9.